Here is a 420-residue protein sequence, read N- to C-terminus: Maturation protein A2 (420 aa).

3 RNA-binding regions span residues 158–176 (IKYL…RAVK), 226–236 (QNRHDKIQRLL), and 294–298 (PVSDW).

Belongs to the Leviviricetes maturation protein family. As to quaternary structure, interacts with host MurA; this interaction inhibits the first step in host cell wall synthesis. Interacts with the capsid protein.

The protein localises to the virion. Its function is as follows. Induces host cell lysis. Inhibits host MurA activity thereby blocking the synthesis of murein precursors necessary for the host cell wall biosynthesis. May be responsible for the attachment to the host pilus. Makes extensive contacts with the viral genome. In Escherichia virus Qbeta (Bacteriophage Q-beta), this protein is Maturation protein A2.